Reading from the N-terminus, the 246-residue chain is Small ribosomal subunit protein uS2 (246 aa).

Belongs to the universal ribosomal protein uS2 family.

The polypeptide is Small ribosomal subunit protein uS2 (Chromohalobacter salexigens (strain ATCC BAA-138 / DSM 3043 / CIP 106854 / NCIMB 13768 / 1H11)).